We begin with the raw amino-acid sequence, 1009 residues long: Probable beta-galactosidase B (1009 aa).

The signal sequence occupies residues 1 to 21 (MAQLFTKIIVYFLLFASPLLA). N-linked (GlcNAc...) asparagine glycosylation is present at Asn28. Tyr85 serves as a coordination point for substrate. N-linked (GlcNAc...) asparagine glycosylation occurs at Asn95. Residues Asn130, Ala131, Glu132, and Asn190 each coordinate substrate. The active-site Proton donor is Glu191. N-linked (GlcNAc...) asparagine glycosylation occurs at Asn247. Tyr260 is a binding site for substrate. An intrachain disulfide couples Cys266 to Cys319. The Nucleophile role is filled by Glu303. Tyr368 contacts substrate. Asn375, Asn406, Asn427, Asn451, Asn682, Asn740, Asn771, Asn784, Asn826, and Asn883 each carry an N-linked (GlcNAc...) asparagine glycan.

The protein belongs to the glycosyl hydrolase 35 family.

It is found in the secreted. It catalyses the reaction Hydrolysis of terminal non-reducing beta-D-galactose residues in beta-D-galactosides.. Cleaves beta-linked terminal galactosyl residues from gangliosides, glycoproteins, and glycosaminoglycans. The sequence is that of Probable beta-galactosidase B (lacB) from Talaromyces marneffei (strain ATCC 18224 / CBS 334.59 / QM 7333) (Penicillium marneffei).